Here is a 249-residue protein sequence, read N- to C-terminus: Sulfate transporter CysZ (249 aa).

The next 4 helical transmembrane spans lie at 26–46 (LFVL…IYFA), 71–91 (VIWP…FTML), 150–170 (LFIL…WLLF), and 206–226 (LGFG…ILMM).

The protein belongs to the CysZ family.

The protein resides in the cell inner membrane. Its function is as follows. High affinity, high specificity proton-dependent sulfate transporter, which mediates sulfate uptake. Provides the sulfur source for the cysteine synthesis pathway. This chain is Sulfate transporter CysZ, found in Pseudomonas fluorescens (strain ATCC BAA-477 / NRRL B-23932 / Pf-5).